The chain runs to 168 residues: tRNA-splicing endonuclease (168 aa).

Active-site residues include Tyr107, His114, and Lys145.

Belongs to the tRNA-intron endonuclease family. Archaeal short subfamily. In terms of assembly, homotetramer; although the tetramer contains four active sites, only two participate in the cleavage. Therefore, it should be considered as a dimer of dimers.

It catalyses the reaction pretRNA = a 3'-half-tRNA molecule with a 5'-OH end + a 5'-half-tRNA molecule with a 2',3'-cyclic phosphate end + an intron with a 2',3'-cyclic phosphate and a 5'-hydroxyl terminus.. In terms of biological role, endonuclease that removes tRNA introns. Cleaves pre-tRNA at the 5'- and 3'-splice sites to release the intron. The products are an intron and two tRNA half-molecules bearing 2',3' cyclic phosphate and 5'-OH termini. Recognizes a pseudosymmetric substrate in which 2 bulged loops of 3 bases are separated by a stem of 4 bp. In Thermococcus kodakarensis (strain ATCC BAA-918 / JCM 12380 / KOD1) (Pyrococcus kodakaraensis (strain KOD1)), this protein is tRNA-splicing endonuclease.